Reading from the N-terminus, the 368-residue chain is H-2 class I histocompatibility antigen, K-D alpha chain (368 aa).

A signal peptide spans 1-21 (MAPCTLLLLLAAALAPTQTRA). An alpha-1 region spans residues 22-111 (GPHSLRYFVT…AQRYYNQSKG (90 aa)). Residues 22 to 305 (GPHSLRYFVT…KLPPSTVSNT (284 aa)) lie on the Extracellular side of the membrane. Asparagine 107 carries N-linked (GlcNAc...) asparagine glycosylation. Positions 112 to 203 (GSHTFQRMFG…ELGNETLLRT (92 aa)) are alpha-2. A disulfide bond links cysteine 122 and cysteine 185. 2 N-linked (GlcNAc...) asparagine glycosylation sites follow: asparagine 197 and asparagine 277. Positions 204–295 (DSPKAHVTYH…GLPEPLTLRW (92 aa)) are alpha-3. Positions 206–294 (PKAHVTYHPR…KGLPEPLTLR (89 aa)) constitute an Ig-like C1-type domain. The cysteines at positions 224 and 280 are disulfide-linked. The segment at 296–305 (KLPPSTVSNT) is connecting peptide. Residues 306 to 328 (VIIAVLVVLGAAIVTGAVVAFVM) form a helical membrane-spanning segment. Residues 329–368 (KMRRNTGGKGVNYALAPGSQTSDLSLPDGKVMVHDPHSLA) are Cytoplasmic-facing. Serine 350 and serine 353 each carry phosphoserine.

This sequence belongs to the MHC class I family. Heterodimer of an alpha chain and a beta chain (beta-2-microglobulin).

The protein resides in the membrane. Functionally, involved in the presentation of foreign antigens to the immune system. The sequence is that of H-2 class I histocompatibility antigen, K-D alpha chain (H2-K1) from Mus musculus (Mouse).